The sequence spans 541 residues: Atrial natriuretic peptide receptor 3 (541 aa).

The first 26 residues, 1–26 (MPSLLVLTFSPCVLLGWALLAGGTGG), serve as a signal peptide directing secretion. Over 27–481 (GGVGGGGGGA…PCKSSGGLEE (455 aa)) the chain is Extracellular. An N-linked (GlcNAc...) (complex) asparagine glycan is attached at asparagine 86. The chloride site is built by serine 106, valine 135, and cysteine 136. Intrachain disulfides connect cysteine 108-cysteine 136 and cysteine 213-cysteine 261. Asparagine 293 is a glycosylation site (N-linked (GlcNAc...) (high mannose) asparagine). An N-linked (GlcNAc...) (complex) asparagine glycan is attached at asparagine 394. A helical transmembrane segment spans residues 482–504 (SAVTGIVVGALLGAGLLMAFYFF). The Cytoplasmic portion of the chain corresponds to 505–541 (RKKYRITIERRTQQEESNLGKHRELREDSIRSHFSVA).

This sequence belongs to the ANF receptor family. Homodimer; disulfide-linked. Dimers can also be formed through the C-terminal cysteine of isoform 2. Interacts with OSTN.

The protein resides in the cell membrane. Receptor for the natriuretic peptide hormones, binding with similar affinities atrial natriuretic peptide NPPA/ANP, brain natriuretic peptide NPPB/BNP, and C-type natriuretic peptide NPPC/CNP. May function as a clearance receptor for NPPA, NPPB and NPPC, regulating their local concentrations and effects. Acts as a regulator of osteoblast differentiation and bone growth by binding to its ligand osteocrin, thereby preventing binding between NPR3/NPR-C and natriuretic peptides, leading to increase cGMP production. The sequence is that of Atrial natriuretic peptide receptor 3 (NPR3) from Homo sapiens (Human).